Reading from the N-terminus, the 204-residue chain is RNA-free ribonuclease P (204 aa).

The protein belongs to the HARP family.

It catalyses the reaction Endonucleolytic cleavage of RNA, removing 5'-extranucleotides from tRNA precursor.. Its function is as follows. RNA-free RNase P that catalyzes the removal of the 5'-leader sequence from pre-tRNA to produce the mature 5'-terminus. This is RNA-free ribonuclease P from Pyrococcus abyssi (strain GE5 / Orsay).